A 331-amino-acid chain; its full sequence is 2-hydroxyacid dehydrogenase homolog (331 aa).

Residues 154-155, 234-236, and Asp-260 contribute to the NAD(+) site; these read HI and TSR. The active site involves Arg-236. Glu-265 is a catalytic residue. His-297 serves as the catalytic Proton donor. Residue 297–300 coordinates NAD(+); sequence HQAF.

Belongs to the D-isomer specific 2-hydroxyacid dehydrogenase family.

The protein is 2-hydroxyacid dehydrogenase homolog (ddh) of Zymomonas mobilis subsp. mobilis (strain ATCC 31821 / ZM4 / CP4).